Consider the following 75-residue polypeptide: Protein RegB (75 aa).

In terms of biological role, required for optimal exotoxin A production. The polypeptide is Protein RegB (regB) (Pseudomonas aeruginosa (strain ATCC 15692 / DSM 22644 / CIP 104116 / JCM 14847 / LMG 12228 / 1C / PRS 101 / PAO1)).